Here is a 426-residue protein sequence, read N- to C-terminus: MFKNLAGSFRAVSRVAFKTRPSLVRSYAAFDRSKPHVNIGTIGHVDHGKTTLTAAITKVLSEKGGANFLDYGSIDRAPEERARGITISTAHVEYQTDKRHYAHVDCPGHADYIKNMITGAAQMDGAIIVVAATDGQMPQTREHLLLARQVGVQHLVVFVNKVDTIDDPEMLELVEMEMRELLSQYGFDGDNTPVIMGSALCALESKQPEIGVQAIEKLLDAVDEHIPTPTRDLEQPFLLPVEDVFSISGRGTVVTGRVERGSLKKGEEIEIVGDFDKPFKTTVTGIEMFKKELDAAMAGDNAGILLRGVKRDDVKRGMVLAKPSTVTSHKKVLASLYILSKEEGGRHSPFGENYKPQLFIRTTDVTGTLRFPAGEGVDHSQMVMPGDNVEMEIELVRKTPLEVNQRFNIREGGKTVGTGLVTRIIE.

The N-terminal 27 residues, 1 to 27 (MFKNLAGSFRAVSRVAFKTRPSLVRSY), are a transit peptide targeting the mitochondrion. Residues 34 to 230 (KPHVNIGTIG…AVDEHIPTPT (197 aa)) form the tr-type G domain. A G1 region spans residues 43-50 (GHVDHGKT). 43 to 50 (GHVDHGKT) is a binding site for GTP. A G2 region spans residues 84 to 88 (GITIS). Positions 105–108 (DCPG) are G3. GTP-binding positions include 105-109 (DCPGH) and 160-163 (NKVD). Residues 160-163 (NKVD) are G4. The G5 stretch occupies residues 198–200 (SAL).

The protein belongs to the TRAFAC class translation factor GTPase superfamily. Classic translation factor GTPase family. EF-Tu/EF-1A subfamily.

It is found in the mitochondrion. Its pathway is protein biosynthesis; polypeptide chain elongation. Functionally, G-protein that, in its active GTP-bound form, binds to and delivers aminoacyl-tRNA to the A-site of ribosomes during protein biosynthesis. In the presence of a correct codon-anticodon match between the aminoacyl-tRNA and the A-site codon of the ribosome-bound mRNA, the ribosome acts as a GTPase activator and the GTP is hydrolyzed. The inactive GDP-bound form leaves the ribosome and must be recycled before binding another molecule of aminoacyl-tRNA. Required for mitochondrial protein biosynthesis and maintenance of mitochondrial DNA. The polypeptide is Elongation factor Tu, mitochondrial (TUF1) (Meyerozyma guilliermondii (strain ATCC 6260 / CBS 566 / DSM 6381 / JCM 1539 / NBRC 10279 / NRRL Y-324) (Yeast)).